A 157-amino-acid polypeptide reads, in one-letter code: Protein-export protein SecB (157 aa).

This sequence belongs to the SecB family. Homotetramer, a dimer of dimers. One homotetramer interacts with 1 SecA dimer.

Its subcellular location is the cytoplasm. Functionally, one of the proteins required for the normal export of preproteins out of the cell cytoplasm. It is a molecular chaperone that binds to a subset of precursor proteins, maintaining them in a translocation-competent state. It also specifically binds to its receptor SecA. This is Protein-export protein SecB from Tolumonas auensis (strain DSM 9187 / NBRC 110442 / TA 4).